A 455-amino-acid polypeptide reads, in one-letter code: MASKCLKAGFSSGSLKSPGGASGGSTRVSAMYSSSSCKLPSLSPVARSFSACSVGLGRSSYRATSCLPALCLPAGGFATSYSGGGGWFGEGILTGNEKETMQSLNDRLAGYLEKVRQLEQENASLESRIREWCEQQVPYMCPDYQSYFRTIEELQKKTLCSKAENARLVVEIDNAKLAADDFRTKYETEVSLRQLVESDINGLRRILDDLTLCKSDLEAQVESLKEELLCLKKNHEEEVNSLRCQLGDRLNVEVDAAPPVDLNRVLEEMRCQYETLVENNRRDAEDWLDTQSEELNQQVVSSSEQLQSCQAEIIELRRTVNALEIELQAQHSMRDALESTLAETEARYSSQLAQMQCMITNVEAQLAEIRADLERQNQEYQVLLDVRARLECEINTYRGLLESEDSKLPCNPCAPDYSPSKSCLPCLPAASCGPSAARTNCSPRPICVPCPGGRF.

A head region spans residues 1–97 (MASKCLKAGF…FGEGILTGNE (97 aa)). Positions 97 to 408 (EKETMQSLND…GLLESEDSKL (312 aa)) constitute an IF rod domain. Positions 98 to 132 (KETMQSLNDRLAGYLEKVRQLEQENASLESRIREW) are coil 1A. Residues 133–143 (CEQQVPYMCPD) are linker 1. Residues 144-244 (YQSYFRTIEE…HEEEVNSLRC (101 aa)) are coil 1B. A linker 12 region spans residues 245–260 (QLGDRLNVEVDAAPPV). The coil 2 stretch occupies residues 261–404 (DLNRVLEEMR…NTYRGLLESE (144 aa)). The tail stretch occupies residues 405–455 (DSKLPCNPCAPDYSPSKSCLPCLPAASCGPSAARTNCSPRPICVPCPGGRF).

It belongs to the intermediate filament family. In terms of tissue distribution, early expression in the hair follicle, mainly found in supramatricial cells and lowermost cortical cells of the hair bulb.

This chain is Keratin, type I cuticular Ha5 (KRT35), found in Homo sapiens (Human).